Here is an 84-residue protein sequence, read N- to C-terminus: Beta-cardiotoxin CTX21 (84 aa).

The signal sequence occupies residues 1 to 21 (MKTLLLTLVVVTIVCLDLGYT). Cystine bridges form between Cys24/Cys43, Cys36/Cys61, Cys65/Cys76, and Cys77/Cys82.

It belongs to the three-finger toxin family. Short-chain subfamily. Aminergic toxin sub-subfamily. Expressed by the venom gland.

The protein localises to the secreted. In terms of biological role, acts as a beta-blocker by binding to beta-1 and beta-2 adrenergic receptors (ADRB1 and ADRB2). It dose-dependently decreases the heart rate (bradycardia), whereas conventional cardiotoxins increases it. At 100 mg/kg, intraperitoneal injection into mice provokes labored breathing, impaired locomotion, lack of response to external stimuli, and death (after 30 minutes). In Ophiophagus hannah (King cobra), this protein is Beta-cardiotoxin CTX21.